The chain runs to 675 residues: Protein kintoun (675 aa).

Disordered regions lie at residues 98–131 (ASKK…KQGA), 265–293 (AGEG…TAPP), 310–340 (EGGA…AVAK), and 509–659 (EAAH…AAPT). Positions 102-113 (QQQEQEKQEKEQ) are enriched in basic and acidic residues. Residues 279–293 (VPGVPDLPGAKTAPP) are compositionally biased toward low complexity. Residues 529–543 (AAAASSGAAPAPAAA) show a composition bias toward low complexity. The segment covering 544–553 (SEEEEEEDKE) has biased composition (acidic residues). Residues 564–577 (DPAAAAAAAGASSG) show a composition bias toward low complexity. A compositionally biased stretch (basic and acidic residues) spans 579–596 (ELTENERKWRELHARQQQ). 2 stretches are compositionally biased toward low complexity: residues 604–617 (AAEA…AAAE) and 628–659 (VAQG…AAPT).

The protein belongs to the PIH1 family. Kintoun subfamily.

The protein localises to the cytoplasm. Functionally, required for cytoplasmic pre-assembly of axonemal dyneins, thereby playing a central role in motility in cilia and flagella. Involved in pre-assembly of dynein arm complexes in the cytoplasm before intraflagellar transport loads them for the ciliary compartment. The protein is Protein kintoun (pf13) of Chlamydomonas reinhardtii (Chlamydomonas smithii).